Reading from the N-terminus, the 302-residue chain is 4-hydroxy-tetrahydrodipicolinate synthase (302 aa).

T55 contributes to the pyruvate binding site. The Proton donor/acceptor role is filled by Y144. The Schiff-base intermediate with substrate role is filled by K172. V214 contributes to the pyruvate binding site.

It belongs to the DapA family. Homotetramer; dimer of dimers.

Its subcellular location is the cytoplasm. The enzyme catalyses L-aspartate 4-semialdehyde + pyruvate = (2S,4S)-4-hydroxy-2,3,4,5-tetrahydrodipicolinate + H2O + H(+). It functions in the pathway amino-acid biosynthesis; L-lysine biosynthesis via DAP pathway; (S)-tetrahydrodipicolinate from L-aspartate: step 3/4. Functionally, catalyzes the condensation of (S)-aspartate-beta-semialdehyde [(S)-ASA] and pyruvate to 4-hydroxy-tetrahydrodipicolinate (HTPA). This Synechococcus sp. (strain CC9311) protein is 4-hydroxy-tetrahydrodipicolinate synthase.